We begin with the raw amino-acid sequence, 135 residues long: D-ribose pyranase (135 aa).

His-20 serves as the catalytic Proton donor. Residues Asp-28, His-102, and 124–126 each bind substrate; that span reads YSN.

Belongs to the RbsD / FucU family. RbsD subfamily. Homodecamer.

It localises to the cytoplasm. The catalysed reaction is beta-D-ribopyranose = beta-D-ribofuranose. It participates in carbohydrate metabolism; D-ribose degradation; D-ribose 5-phosphate from beta-D-ribopyranose: step 1/2. In terms of biological role, catalyzes the interconversion of beta-pyran and beta-furan forms of D-ribose. The polypeptide is D-ribose pyranase (Thermotoga maritima (strain ATCC 43589 / DSM 3109 / JCM 10099 / NBRC 100826 / MSB8)).